The sequence spans 852 residues: Polyphosphate kinase (852 aa).

2 disordered regions span residues 1-36 (MATGVSSRDGSRERIRRRAVARDHPGCGPHRLDRPI) and 58-82 (SHDPAPSQSVGKRPQKSTKTASRRK). Basic and acidic residues predominate over residues 20 to 36 (VARDHPGCGPHRLDRPI). Over residues 58-67 (SHDPAPSQSV) the composition is skewed to polar residues. An ATP-binding site is contributed by N131. Positions 251–303 (GDEIGPQRTPPPSDSLDNRVPSNLKRNSDTANQQPTPAENISAPEDGAEQTEP) are disordered. The insert stretch occupies residues 258–303 (RTPPPSDSLDNRVPSNLKRNSDTANQQPTPAENISAPEDGAEQTEP). Residues 270–289 (VPSNLKRNSDTANQQPTPAE) are compositionally biased toward polar residues. The Mg(2+) site is built by R524 and R554. H584 (phosphohistidine intermediate) is an active-site residue. Y617, R713, and H741 together coordinate ATP.

The protein belongs to the polyphosphate kinase 1 (PPK1) family. The cofactor is Mg(2+). Post-translationally, an intermediate of this reaction is the autophosphorylated ppk in which a phosphate is covalently linked to a histidine residue through a N-P bond.

The enzyme catalyses [phosphate](n) + ATP = [phosphate](n+1) + ADP. In terms of biological role, catalyzes the reversible transfer of the terminal phosphate of ATP to form a long-chain polyphosphate (polyP). The protein is Polyphosphate kinase of Rhodopirellula baltica (strain DSM 10527 / NCIMB 13988 / SH1).